A 181-amino-acid polypeptide reads, in one-letter code: Trypsin inhibitor B (181 aa).

Intrachain disulfides connect cysteine 39-cysteine 86 and cysteine 136-cysteine 145.

It belongs to the protease inhibitor I3 (leguminous Kunitz-type inhibitor) family.

In terms of biological role, inhibition of trypsin. In Glycine max (Soybean), this protein is Trypsin inhibitor B.